The primary structure comprises 518 residues: Chromosomal replication initiator protein DnaA (518 aa).

The tract at residues 1 to 72 (MTLAEFWPLC…VREELAAGRS (72 aa)) is domain I, interacts with DnaA modulators. The tract at residues 72-180 (SAFVFKPGEG…DAEEARYEQT (109 aa)) is domain II. The interval 145–172 (EPRQAAGSASRPESVAVAKARTDVQRDA) is disordered. The domain III, AAA+ region stretch occupies residues 181 to 397 (NLSPDYTFDT…GAFNRVGASS (217 aa)). ATP is bound by residues Gly-225, Gly-227, Lys-228, and Thr-229. The segment at 398-518 (RFMNRPVIDI…YEKLLILIQN (121 aa)) is domain IV, binds dsDNA.

This sequence belongs to the DnaA family. Oligomerizes as a right-handed, spiral filament on DNA at oriC.

Its subcellular location is the cytoplasm. In terms of biological role, plays an essential role in the initiation and regulation of chromosomal replication. ATP-DnaA binds to the origin of replication (oriC) to initiate formation of the DNA replication initiation complex once per cell cycle. Binds the DnaA box (a 9 base pair repeat at the origin) and separates the double-stranded (ds)DNA. Forms a right-handed helical filament on oriC DNA; dsDNA binds to the exterior of the filament while single-stranded (ss)DNA is stabiized in the filament's interior. The ATP-DnaA-oriC complex binds and stabilizes one strand of the AT-rich DNA unwinding element (DUE), permitting loading of DNA polymerase. After initiation quickly degrades to an ADP-DnaA complex that is not apt for DNA replication. Binds acidic phospholipids. The polypeptide is Chromosomal replication initiator protein DnaA (Neisseria meningitidis serogroup B (strain ATCC BAA-335 / MC58)).